Reading from the N-terminus, the 814-residue chain is E3 ubiquitin-protein ligase TRIM71 (814 aa).

An RING-type zinc finger spans residues 12–76 (CPLCKEMCVS…SLQLRCPVCD (65 aa)). The segment at 111–146 (QQQSNGGRTASNRQRSASCSSSGLLRRAPPSQSEPR) is disordered. A compositionally biased stretch (low complexity) spans 120 to 138 (ASNRQRSASCSSSGLLRRA). The B box-type 1; atypical zinc-finger motif lies at 142-189 (QSEPRCSSCDDGNGASSHCLDCQENLCDNCLRAHQRVRLTKDHFIERF). The Zn(2+) site is built by cysteine 147, cysteine 150, cysteine 171, histidine 175, cysteine 224, histidine 227, cysteine 247, and histidine 252. The B box-type 2 zinc-finger motif lies at 219 to 260 (PERLYCQQHDEEVLHFYCDSCSVPICRECTMGRHAGHSFVYL). Positions 282–370 (RQAIQLSLEQ…INAVQQVLEE (89 aa)) form a coiled coil. The stretch at 425 to 526 (SSGAFAALTK…IENSPFKVNV (102 aa)) is one Filamin repeat. 6 NHL repeats span residues 539–582 (TLSF…FKPC), 586–629 (HHKF…FTFE), 633–676 (LLKF…FGPD), 680–723 (LNKY…IKPD), 727–770 (AHFL…FEPN), and 774–814 (LCKF…ILAF).

This sequence belongs to the TRIM/RBCC family.

The protein localises to the cytoplasm. Its subcellular location is the P-body. It carries out the reaction S-ubiquitinyl-[E2 ubiquitin-conjugating enzyme]-L-cysteine + [acceptor protein]-L-lysine = [E2 ubiquitin-conjugating enzyme]-L-cysteine + N(6)-ubiquitinyl-[acceptor protein]-L-lysine.. The protein operates within protein modification; protein ubiquitination. In terms of biological role, E3 ubiquitin-protein ligase that cooperates with the microRNAs (miRNAs) machinery and promotes embryonic stem cells proliferation and maintenance. Binds to miRNAs and participates in post-transcriptional repression of transcripts. Required to maintain proliferation and prevent premature differentiation of neural progenitor cells during early neural development. This chain is E3 ubiquitin-protein ligase TRIM71 (trim71), found in Xenopus tropicalis (Western clawed frog).